Reading from the N-terminus, the 1069-residue chain is Carbamoyl phosphate synthase large chain (1069 aa).

Residues 1-401 are carboxyphosphate synthetic domain; sequence MPLNKDIKKV…AFLKGIRSLE (401 aa). Residues Arg-129, Arg-169, Gly-175, Gly-176, Lys-208, Val-210, Glu-215, Gly-241, Ile-242, His-243, Gln-284, and Glu-298 each coordinate ATP. Residues 133-327 form the ATP-grasp 1 domain; the sequence is RDMMNRIGEP…IAKLAAKIAL (195 aa). The Mg(2+) site is built by Gln-284, Glu-298, and Asn-300. The Mn(2+) site is built by Gln-284, Glu-298, and Asn-300. The segment at 402 to 549 is oligomerization domain; the sequence is IGKYSLDHKK…YSTYEQYDEV (148 aa). The segment at 550 to 932 is carbamoyl phosphate synthetic domain; that stretch reads EVSNRRKVIV…ALYKGFVGAN (383 aa). Residues 674–864 enclose the ATP-grasp 2 domain; that stretch reads DELLERLDIS…IVDIATQVMM (191 aa). ATP is bound by residues Arg-710, Lys-749, Leu-751, Glu-755, Gly-780, Val-781, His-782, Ser-783, Gln-823, and Glu-835. Positions 823, 835, and 837 each coordinate Mg(2+). Residues Gln-823, Glu-835, and Asn-837 each contribute to the Mn(2+) site. One can recognise an MGS-like domain in the interval 932 to 1069; sequence NMYPSKEKGK…KDLEVFDITK (138 aa). Positions 933 to 1069 are allosteric domain; that stretch reads MYPSKEKGKI…KDLEVFDITK (137 aa).

This sequence belongs to the CarB family. As to quaternary structure, composed of two chains; the small (or glutamine) chain promotes the hydrolysis of glutamine to ammonia, which is used by the large (or ammonia) chain to synthesize carbamoyl phosphate. Tetramer of heterodimers (alpha,beta)4. The cofactor is Mg(2+). Mn(2+) serves as cofactor.

It carries out the reaction hydrogencarbonate + L-glutamine + 2 ATP + H2O = carbamoyl phosphate + L-glutamate + 2 ADP + phosphate + 2 H(+). It catalyses the reaction hydrogencarbonate + NH4(+) + 2 ATP = carbamoyl phosphate + 2 ADP + phosphate + 2 H(+). It participates in amino-acid biosynthesis; L-arginine biosynthesis; carbamoyl phosphate from bicarbonate: step 1/1. The protein operates within pyrimidine metabolism; UMP biosynthesis via de novo pathway; (S)-dihydroorotate from bicarbonate: step 1/3. Functionally, large subunit of the glutamine-dependent carbamoyl phosphate synthetase (CPSase). CPSase catalyzes the formation of carbamoyl phosphate from the ammonia moiety of glutamine, carbonate, and phosphate donated by ATP, constituting the first step of 2 biosynthetic pathways, one leading to arginine and/or urea and the other to pyrimidine nucleotides. The large subunit (synthetase) binds the substrates ammonia (free or transferred from glutamine from the small subunit), hydrogencarbonate and ATP and carries out an ATP-coupled ligase reaction, activating hydrogencarbonate by forming carboxy phosphate which reacts with ammonia to form carbamoyl phosphate. This chain is Carbamoyl phosphate synthase large chain, found in Clostridium botulinum (strain Eklund 17B / Type B).